We begin with the raw amino-acid sequence, 568 residues long: Potassium-transporting ATPase potassium-binding subunit (568 aa).

Helical transmembrane passes span 6–26 (ILQI…IGGF), 64–84 (TGYA…TYLI), 135–155 (IALA…AIAF), 179–199 (LYIL…QGVI), 254–274 (LANL…TYTF), 285–305 (WALL…VYPA), 382–402 (GLYG…LMVG), 419–439 (MVML…AAGI), 459–481 (VLYG…SANT), 488–508 (LGIA…AAAG), and 529–549 (LFVT…FFPA).

It belongs to the KdpA family. The system is composed of three essential subunits: KdpA, KdpB and KdpC.

It is found in the cell inner membrane. Its function is as follows. Part of the high-affinity ATP-driven potassium transport (or Kdp) system, which catalyzes the hydrolysis of ATP coupled with the electrogenic transport of potassium into the cytoplasm. This subunit binds the periplasmic potassium ions and delivers the ions to the membrane domain of KdpB through an intramembrane tunnel. In Solibacter usitatus (strain Ellin6076), this protein is Potassium-transporting ATPase potassium-binding subunit.